A 184-amino-acid chain; its full sequence is GGDGSLTGANRFKGEWSSLVKELLETGKITKEVAEKHSHLNIVGMVGSIDNDFCGTDMTIGTDSALHRIVEVADNIIPTAYSHQRAFVLEVMGRHCGYLALVAGIVTEADFVFAPEWPPEEDWPEKLCKKLELERQSGQRLNIIIVAEGAIDRQGNPITAEGVKKIIVDRLEMDTRTTVLGHIQ.

The tract at residues 1-184 is N-terminal catalytic PFK domain 1; that stretch reads GGDGSLTGAN…TRTTVLGHIQ (184 aa). 2-5 provides a ligand contact to ATP; the sequence is GDGS. Position 3 (D3) interacts with Mg(2+). Residues 48 to 50, R85, 92 to 94, E148, R176, and 182 to 184 each bind substrate; these read SID, MGR, and HIQ. D50 serves as the catalytic Proton acceptor.

The protein belongs to the phosphofructokinase type A (PFKA) family. ATP-dependent PFK group I subfamily. Eukaryotic two domain clade 'E' sub-subfamily. Homotetramer. Mg(2+) is required as a cofactor.

Its subcellular location is the cytoplasm. It catalyses the reaction beta-D-fructose 6-phosphate + ATP = beta-D-fructose 1,6-bisphosphate + ADP + H(+). It participates in carbohydrate degradation; glycolysis; D-glyceraldehyde 3-phosphate and glycerone phosphate from D-glucose: step 3/4. Its activity is regulated as follows. Allosterically activated by ADP, AMP, or fructose 2,6-bisphosphate, and allosterically inhibited by ATP or citrate. Its function is as follows. Catalyzes the phosphorylation of D-fructose 6-phosphate to fructose 1,6-bisphosphate by ATP, the first committing step of glycolysis. The protein is ATP-dependent 6-phosphofructokinase (PFK) of Calanus finmarchicus (Calanus tonsus).